The primary structure comprises 303 residues: Methionyl-tRNA formyltransferase (303 aa).

108-111 (SDLP) contributes to the (6S)-5,6,7,8-tetrahydrofolate binding site.

Belongs to the Fmt family.

It catalyses the reaction L-methionyl-tRNA(fMet) + (6R)-10-formyltetrahydrofolate = N-formyl-L-methionyl-tRNA(fMet) + (6S)-5,6,7,8-tetrahydrofolate + H(+). Attaches a formyl group to the free amino group of methionyl-tRNA(fMet). The formyl group appears to play a dual role in the initiator identity of N-formylmethionyl-tRNA by promoting its recognition by IF2 and preventing the misappropriation of this tRNA by the elongation apparatus. The chain is Methionyl-tRNA formyltransferase from Rickettsia peacockii (strain Rustic).